We begin with the raw amino-acid sequence, 153 residues long: Large ribosomal subunit protein uL22 (153 aa).

The protein belongs to the universal ribosomal protein uL22 family. In terms of assembly, part of the 50S ribosomal subunit.

This protein binds specifically to 23S rRNA. It makes multiple contacts with different domains of the 23S rRNA in the assembled 50S subunit and ribosome. Functionally, the globular domain of the protein is located near the polypeptide exit tunnel on the outside of the subunit, while an extended beta-hairpin is found that lines the wall of the exit tunnel in the center of the 70S ribosome. The sequence is that of Large ribosomal subunit protein uL22 from Methanococcus aeolicus (strain ATCC BAA-1280 / DSM 17508 / OCM 812 / Nankai-3).